The chain runs to 70 residues: Antimicrobial peptide VpCT1 (70 aa).

An N-terminal signal peptide occupies residues M1–A23. L36 bears the Leucine amide mark. Positions G37–R70 are excised as a propeptide.

It belongs to the non-disulfide-bridged peptide (NDBP) superfamily. Short antimicrobial peptide (group 4) family. Expressed by the venom gland.

Its subcellular location is the secreted. The protein localises to the target cell membrane. In terms of biological role, antimicrobial peptide with potent activity against bacteria S.aureus (MIC=4.7 uM) and E.coli (MIC=31.5 uM), and pathogenic yeasts C.albicans (MIC=25 uM) and C.glabrata (MIC=12.5 uM). Is not very effective against P.aeruginosa (MIC=150 and &gt;300 uM). Also provokes moderate hemolysis on human erythrocytes (HC(50)=10.5 uM). This chain is Antimicrobial peptide VpCT1, found in Mesomexovis punctatus (Scorpion).